The primary structure comprises 446 residues: Chromosomal replication initiator protein DnaA (446 aa).

The tract at residues 1–73 (MAAQLNELWQ…INSMKIITTK (73 aa)) is domain I, interacts with DnaA modulators. The interval 73-107 (KKYDIAFLISSEEALETDEDQETDTNNVNTDTSSS) is domain II. A domain III, AAA+ region region spans residues 108–324 (MLNPKYKFDS…GALIRIVAFS (217 aa)). ATP-binding residues include glycine 152, glycine 154, lysine 155, and threonine 156. Positions 325 to 446 (SLTNKEISVD…NEITKRFSPK (122 aa)) are domain IV, binds dsDNA.

The protein belongs to the DnaA family. Oligomerizes as a right-handed, spiral filament on DNA at oriC.

It localises to the cytoplasm. Its function is as follows. Plays an essential role in the initiation and regulation of chromosomal replication. ATP-DnaA binds to the origin of replication (oriC) to initiate formation of the DNA replication initiation complex once per cell cycle. Binds the DnaA box (a 9 base pair repeat at the origin) and separates the double-stranded (ds)DNA. Forms a right-handed helical filament on oriC DNA; dsDNA binds to the exterior of the filament while single-stranded (ss)DNA is stabiized in the filament's interior. The ATP-DnaA-oriC complex binds and stabilizes one strand of the AT-rich DNA unwinding element (DUE), permitting loading of DNA polymerase. After initiation quickly degrades to an ADP-DnaA complex that is not apt for DNA replication. Binds acidic phospholipids. In Clostridium acetobutylicum (strain ATCC 824 / DSM 792 / JCM 1419 / IAM 19013 / LMG 5710 / NBRC 13948 / NRRL B-527 / VKM B-1787 / 2291 / W), this protein is Chromosomal replication initiator protein DnaA.